Here is a 404-residue protein sequence, read N- to C-terminus: Tryptophan synthase beta chain (404 aa).

Residue Lys-94 is modified to N6-(pyridoxal phosphate)lysine.

This sequence belongs to the TrpB family. As to quaternary structure, tetramer of two alpha and two beta chains. Pyridoxal 5'-phosphate serves as cofactor.

The catalysed reaction is (1S,2R)-1-C-(indol-3-yl)glycerol 3-phosphate + L-serine = D-glyceraldehyde 3-phosphate + L-tryptophan + H2O. The protein operates within amino-acid biosynthesis; L-tryptophan biosynthesis; L-tryptophan from chorismate: step 5/5. In terms of biological role, the beta subunit is responsible for the synthesis of L-tryptophan from indole and L-serine. The protein is Tryptophan synthase beta chain of Staphylococcus aureus (strain MRSA252).